The following is a 134-amino-acid chain: kinetoplast-associated protein 3 (134 aa).

Positions 1–10 (MLRRSPTLLR) are excised as a propeptide. Residues 106 to 124 (PKAPKAAKSASSKVKTAAK) show a composition bias toward low complexity. Positions 106–134 (PKAPKAAKSASSKVKTAAKTAKKTTAARK) are disordered. The span at 125–134 (TAKKTTAARK) shows a compositional bias: basic residues.

This sequence belongs to the KAP family. In terms of assembly, associates with the kinetoplast DNA network.

Its subcellular location is the mitochondrion matrix. The protein resides in the kinetoplast. Histone H1-like DNA-binding protein involved in the organization and segregation of kinetoplast DNA (kDNA). The mitochondrial DNA of kinetoplastid protozoa consists of about 5,000 minicircles and 20 to 30 maxicircles. These circular DNAs are held together by catenation into a highly organized compact disk structure referred to as a kinetoplast DNA (kDNA) network. Binds preferentially to a specific fragment of minicircle DNA and is able to compact kDNA networks through DNA charge neutralization and condensation. The polypeptide is kinetoplast-associated protein 3 (KAP3) (Crithidia fasciculata).